The primary structure comprises 62 residues: Sperm protamine P1 (62 aa).

A disordered region spans residues M1–Y62.

It belongs to the protamine P1 family. In terms of tissue distribution, testis.

It localises to the nucleus. The protein resides in the chromosome. Its function is as follows. Protamines substitute for histones in the chromatin of sperm during the haploid phase of spermatogenesis. They compact sperm DNA into a highly condensed, stable and inactive complex. In Antechinomys laniger (Eastern jerboa marsupial), this protein is Sperm protamine P1 (PRM1).